We begin with the raw amino-acid sequence, 448 residues long: tRNA modification GTPase MnmE (448 aa).

(6S)-5-formyl-5,6,7,8-tetrahydrofolate contacts are provided by R24, E81, and K120. The 158-residue stretch at 216–373 (GLNVVLVGAP…LKRTLLREAG (158 aa)) folds into the TrmE-type G domain. N226 is a binding site for K(+). Residues 226–231 (NVGKSS), 245–251 (TDIAGTT), and 270–273 (DTAG) contribute to the GTP site. S230 lines the Mg(2+) pocket. The K(+) site is built by T245, I247, and T250. T251 serves as a coordination point for Mg(2+). Residue K448 participates in (6S)-5-formyl-5,6,7,8-tetrahydrofolate binding.

It belongs to the TRAFAC class TrmE-Era-EngA-EngB-Septin-like GTPase superfamily. TrmE GTPase family. As to quaternary structure, homodimer. Heterotetramer of two MnmE and two MnmG subunits. The cofactor is K(+).

It is found in the cytoplasm. Functionally, exhibits a very high intrinsic GTPase hydrolysis rate. Involved in the addition of a carboxymethylaminomethyl (cmnm) group at the wobble position (U34) of certain tRNAs, forming tRNA-cmnm(5)s(2)U34. The polypeptide is tRNA modification GTPase MnmE (Neisseria meningitidis serogroup C (strain 053442)).